A 430-amino-acid chain; its full sequence is Inactive metallocarboxypeptidase ECM14 (430 aa).

The signal sequence occupies residues 1-24; the sequence is MLHMNSLWGCFLFVLLAVTGAVQG. The propeptide occupies 25-105; sequence LQEDYSEYAV…TLPTSQMMAR (81 aa). An N-linked (GlcNAc...) asparagine glycan is attached at asparagine 41. One can recognise a Peptidase M14 domain in the interval 120-425; the sequence is EYRDLDTIYM…AALKYFCDFL (306 aa). Zn(2+) contacts are provided by histidine 182 and glutamate 185. Substrate is bound by residues 182-185, arginine 240, and 257-258; these read HARE and DH. A disulfide bridge connects residues cysteine 251 and cysteine 272. An N-linked (GlcNAc...) asparagine glycan is attached at asparagine 295. Position 310 (histidine 310) interacts with Zn(2+). 311 to 312 lines the substrate pocket; it reads SY.

The protein belongs to the peptidase M14 family. Requires Zn(2+) as cofactor. In terms of processing, N-glycosylated.

It is found in the vacuole. It localises to the secreted. Its function is as follows. Inactive carboxypeptidase that may play a role in cell wall organization and biogenesis. The chain is Inactive metallocarboxypeptidase ECM14 from Saccharomyces cerevisiae (strain ATCC 204508 / S288c) (Baker's yeast).